A 305-amino-acid polypeptide reads, in one-letter code: Virulence plasmid integrase pGP7-D (305 aa).

The 87-residue stretch at 13 to 99 (LTFGDASEIW…CYISFTKFLY (87 aa)) folds into the Core-binding (CB) domain. Residues 127–305 (IKTESISKQE…SPLVQTPPIL (179 aa)) enclose the Tyr recombinase domain. Active-site residues include Lys-188 and Arg-257. Residue Tyr-289 is the O-(3'-phospho-DNA)-tyrosine intermediate of the active site.

It belongs to the 'phage' integrase family.

This chain is Virulence plasmid integrase pGP7-D, found in Chlamydia trachomatis serovar L2 (strain ATCC VR-902B / DSM 19102 / 434/Bu).